A 291-amino-acid polypeptide reads, in one-letter code: MIRSMTGFGSASKTQDDLSVSVELKSVNYRFKEVNARLPRPLLYFEDKLKQTILQHIQRGRIELFVSVDSDMLVEKRLEIDWPLLDEFVAAARDMKKRYQLSAEPDVMDFFKLDHVVQVHEEQTQNDKLEALIIDAAEEAVKGLCEMREKEGLLLAKDCLMHIDQLEELVRETELLAADVVSRYRERLYARIKEWTEDVLDESRLVTECAIFADRSDITEEITRLKSHFAQFRDILASGGAVGRKLDFLVQELNREANTIGSKANDHQITKLVVEMKSSIEKIKEQVQNIE.

The protein belongs to the YicC/YloC family. In terms of assembly, oligomerizes, perhaps as a hexamer. Might interact with PNPase (pnp) in E.coli. A divalent metal cation serves as cofactor.

In terms of biological role, endonucleolytically cleaves ssRNA generating a 3'-OH and (presumably) a 5'-phosphate group. Cleaves preferentially at U residues, has no activity on dsRNA or dsDNA. Upon expression in E.coli contributes to the degradation of small RNA (sRNA) RhyB. This is Endoribonuclease YloC (yloC) from Bacillus subtilis (strain 168).